A 491-amino-acid polypeptide reads, in one-letter code: F-box/LRR-repeat protein 7 (491 aa).

The segment at 1–79 is disordered; sequence MGANNGKQYG…GRGSSTSSSS (79 aa). Low complexity predominate over residues 10–26; it reads GSEGKGSSSISSDVSSS. Residues 27 to 55 are compositionally biased toward polar residues; sequence TDHTPTKAQKNVATSEDSDLSMRTLSTPS. The F-box domain occupies 111 to 157; that stretch reads QASIDRLPDHSMVQIFSFLPTNQLCRCARVCRRWYNLAWDPRLWRTI. 11 LRR repeats span residues 170 to 195, 196 to 221, 222 to 247, 253 to 281, 282 to 307, 308 to 333, 334 to 359, 360 to 385, 386 to 411, 412 to 437, and 438 to 463; these read LKVLTRRLCQDTPNVCLMLETVTVSG, CRRLTDRGLYTIAQCCPELRRLEVSG, CYNISNEAVFDVVSLCPNLEHLDVSG, CISLTREASIKLSPLHGKQISIRYLDMTD, CFVLEDEGLHTIAAHCTQLTHLYLRR, CVRLTDEGLRYLVIYCASIKELSVSD, CRFVSDFGLREIAKLESRLRYLSIAH, CGRVTDVGIRYVAKYCSKLRYLNARG, CEGITDHGVEYLAKNCTKLKSLDIGK, CPLVSDTGLECLALNCFNLKRLSLKS, and CESITGQGLQIVAANCFDLQTLNVQD.

Belongs to the FBXL7 family. Part of the SCF (SKP1-CUL1-F-box) E3 ubiquitin-protein ligase complex SCF(FBXL7) composed of CUL1, SKP1, RBX1 and FBXL7. Interacts with AURKA; interaction takes place during mitosis but not in interphase. Interacts with BIRC5; this interaction allows BIRC5 to be polyubiquitinated by the SCF(FBXL7) E3 ubiquitin-protein ligase complex.

The protein resides in the cytoplasm. It is found in the cytoskeleton. The protein localises to the microtubule organizing center. Its subcellular location is the centrosome. The protein operates within protein modification; protein ubiquitination. Substrate recognition component of a SCF (SKP1-CUL1-F-box protein) E3 ubiquitin-protein ligase complex. During mitosis, it mediates the ubiquitination and subsequent proteasomal degradation of AURKA, causing mitotic arrest. It also regulates mitochondrial function by mediating the ubiquitination and proteasomal degradation of the apoptosis inhibitor BIRC5. The chain is F-box/LRR-repeat protein 7 (FBXL7) from Homo sapiens (Human).